A 238-amino-acid polypeptide reads, in one-letter code: NADH-quinone oxidoreductase subunit C (238 aa).

The interval 1 to 20 is disordered; the sequence is MSSPDQNPSDAAGQTGSSNE.

The protein belongs to the complex I 30 kDa subunit family. NDH-1 is composed of 14 different subunits. Subunits NuoB, C, D, E, F, and G constitute the peripheral sector of the complex.

It is found in the cell membrane. The catalysed reaction is a quinone + NADH + 5 H(+)(in) = a quinol + NAD(+) + 4 H(+)(out). In terms of biological role, NDH-1 shuttles electrons from NADH, via FMN and iron-sulfur (Fe-S) centers, to quinones in the respiratory chain. The immediate electron acceptor for the enzyme in this species is believed to be a menaquinone. Couples the redox reaction to proton translocation (for every two electrons transferred, four hydrogen ions are translocated across the cytoplasmic membrane), and thus conserves the redox energy in a proton gradient. The protein is NADH-quinone oxidoreductase subunit C of Mycobacterium ulcerans (strain Agy99).